Here is a 680-residue protein sequence, read N- to C-terminus: Serine/threonine-protein kinase YPK1 (680 aa).

Residues 1–11 (MYSWKSKFKFG) are compositionally biased toward basic residues. A disordered region spans residues 1 to 117 (MYSWKSKFKF…GTPNDATSSS (117 aa)). 2 stretches are compositionally biased toward basic and acidic residues: residues 12-21 (KSKEEKEAKH) and 41-56 (GEHD…DRKG). T57 bears the Phosphothreonine mark. A compositionally biased stretch (low complexity) spans 59 to 71 (NPSNSSVVPVRVS). S61, S64, and S71 each carry phosphoserine. Over residues 73–83 (DASSSTSTVRD) the composition is skewed to polar residues. The span at 84-97 (SNGGNSENTNSSQN) shows a compositional bias: low complexity. The segment covering 98–117 (LDETANIGSTGTPNDATSSS) has biased composition (polar residues). At S170 the chain carries Phosphoserine. Positions 347–602 (FDLLKVIGKG…ADEIRNHPFF (256 aa)) constitute a Protein kinase domain. ATP is bound by residues 353-361 (IGKGSFGKV) and K376. The active-site Proton acceptor is D470. A Phosphothreonine modification is found at T502. T504 is subject to Phosphothreonine; by PKH1. The 71-residue stretch at 603–673 (SQLSWKRLLM…VGNEQLGSSM (71 aa)) folds into the AGC-kinase C-terminal domain. Phosphoserine is present on residues S644 and S653. The residue at position 662 (T662) is a Phosphothreonine; by PKH1. Phosphoserine is present on S671.

It belongs to the protein kinase superfamily. AGC Ser/Thr protein kinase family. RAC subfamily. Post-translationally, autophosphorylated. Phytosphingosine level stimulates phosphorylation by PKH1. The N-terminal half is phosphorylated by FPK1. Phosphorylation is inhibited by exogenous addition of phytosphingosine.

The protein localises to the cytoplasm. It localises to the cell membrane. It carries out the reaction L-seryl-[protein] + ATP = O-phospho-L-seryl-[protein] + ADP + H(+). It catalyses the reaction L-threonyl-[protein] + ATP = O-phospho-L-threonyl-[protein] + ADP + H(+). With respect to regulation, activated by phytosphingosine (PHS), a sphingoid long chain base. Activated by PKH1 phosphorylation. Functionally, plays an essential role in the proliferation of yeast cells. Involved in a signaling pathway, required for optimal cell wall integrity, that acts in parallel with the PKC1-SLT2-dependent pathway. Downstream kinase in the sphingolipid-mediated signaling pathway. Phosphorylation is regulated by the intracellular sphingolipid concentration. Disruption or inhibition of sphingolipid synthesis leads to the activation and phosphorylation of YPK1 through the TORC2 and PKH1 pathways, which in turn phosphorylates ORM1 and LAG1 to activate sphingolipid synthesis. Cooperates with SLI1 in mediating resistance to the sphingolipid biosynthesis inhibitor drug myriocin (ISP-1); kinase activity is essential for the resistance. Required for both receptor-mediated and fluid-phase endocytosis, but is not necessary for receptor phosphorylation or ubiquitination. Necessary for the internalization of plasma membrane proteins carrying different types of internalization signals. Acts downstream of the PKH kinases to control endocytosis by phosphorylating components of the endocytic machinery. Phosphorylation of residue Thr-504 in the activation loop and residue Thr-662 are essential for activity. Phosphorylates and down-regulates flippase activator FPK1. This is Serine/threonine-protein kinase YPK1 (YPK1) from Saccharomyces cerevisiae (strain ATCC 204508 / S288c) (Baker's yeast).